A 268-amino-acid polypeptide reads, in one-letter code: Undecaprenyl-diphosphatase (268 aa).

The next 7 membrane-spanning stretches (helical) occupy residues 43–63, 85–105, 108–128, 141–161, 184–204, 217–237, and 246–266; these read FWKT…LAIY, IGVL…GTFI, VLFN…VLLW, AMAF…AAMV, AAEF…VYDV, FIII…VKTF, and FTFF…ALAL.

It belongs to the UppP family.

It localises to the cell inner membrane. The catalysed reaction is di-trans,octa-cis-undecaprenyl diphosphate + H2O = di-trans,octa-cis-undecaprenyl phosphate + phosphate + H(+). Functionally, catalyzes the dephosphorylation of undecaprenyl diphosphate (UPP). Confers resistance to bacitracin. The polypeptide is Undecaprenyl-diphosphatase (Afipia carboxidovorans (strain ATCC 49405 / DSM 1227 / KCTC 32145 / OM5) (Oligotropha carboxidovorans)).